The primary structure comprises 165 residues: ER membrane protein complex subunit 5 (165 aa).

The Cytoplasmic portion of the chain corresponds to 1-3; sequence MAP. The chain crosses the membrane as a helical span at residues 4-22; that stretch reads SLWKGLVGIGLFALAHAAF. Residues 23-77 are Lumenal-facing; the sequence is SAAQHYFPSSGIKWKRKCEFLQSSSFQDKIFRSMYYVYDRSYMRLTEKEDESLPI. Residues 78–97 form a helical membrane-spanning segment; the sequence is DIVLQTLLAFAVTCYGIVHI. At 98–165 the chain is on the cytoplasmic side; that stretch reads AGEFKDMDAT…KLRKLESLRR (68 aa). Ser-154 is modified (phosphoserine).

The protein belongs to the membrane magnesium transporter (TC 1.A.67) family. As to quaternary structure, component of the ER membrane protein complex (EMC).

It is found in the endoplasmic reticulum membrane. Its subcellular location is the golgi apparatus membrane. It localises to the early endosome membrane. Its function is as follows. Part of the endoplasmic reticulum membrane protein complex (EMC) that enables the energy-independent insertion into endoplasmic reticulum membranes of newly synthesized membrane proteins. Preferentially accommodates proteins with transmembrane domains that are weakly hydrophobic or contain destabilizing features such as charged and aromatic residues. Involved in the cotranslational insertion of multi-pass membrane proteins in which stop-transfer membrane-anchor sequences become ER membrane spanning helices. It is also required for the post-translational insertion of tail-anchored/TA proteins in endoplasmic reticulum membranes. By mediating the proper cotranslational insertion of N-terminal transmembrane domains in an N-exo topology, with translocated N-terminus in the lumen of the ER, controls the topology of multi-pass membrane proteins like the G protein-coupled receptors. By regulating the insertion of various proteins in membranes, it is indirectly involved in many cellular processes. May be involved in Mg(2+) transport. This Bos taurus (Bovine) protein is ER membrane protein complex subunit 5.